The following is a 201-amino-acid chain: UPF0301 protein ROP_34500 (201 aa).

Belongs to the UPF0301 (AlgH) family.

The protein is UPF0301 protein ROP_34500 of Rhodococcus opacus (strain B4).